The sequence spans 641 residues: Sodium-dependent nutrient amino acid transporter 1 (641 aa).

The interval 1 to 38 (MELKGVQPSNGSSNGSGNGATNAASTEKTDAEKPTAER) is disordered. The Cytoplasmic segment spans residues 1–40 (MELKGVQPSNGSSNGSGNGATNAASTEKTDAEKPTAERTN). Low complexity predominate over residues 9 to 26 (SNGSSNGSGNGATNAAST). Positions 27–36 (EKTDAEKPTA) are enriched in basic and acidic residues. The next 3 membrane-spanning stretches (helical) occupy residues 41–61 (WGNG…LGNV), 74–94 (GAFL…MYYL), and 111–131 (SVVP…ICII). Residues asparagine 185 and asparagine 190 are each glycosylated (N-linked (GlcNAc...) asparagine). 9 helical membrane passes run 229–249 (PDWK…LVIM), 258–278 (AAYF…IRAV), 307–327 (AVVQ…MFAS), 341–361 (IVTT…FAIL), 401–421 (LFSV…IVAL), 447–467 (VCGF…ILTL), 474–494 (TYVV…VYGL), 516–536 (CWSF…MVTI), and 552–572 (IAGW…GLWY).

This sequence belongs to the sodium:neurotransmitter symporter (SNF) (TC 2.A.22) family. In terms of tissue distribution, in larvae, weak specific expression in the anterior midgut just proximal to the gastric caeca reproductive rudiments, common ureters of the Malpighian tubules, and distal swollen portion of the anterior pair of Malpighian tubules. Expression is also seen in the imaginal disks of the head; brain hemispheres and the ventral ganglion. Stronger expression in the posterior midgut.

The protein resides in the membrane. In terms of biological role, unusual broad substrate spectrum amino acid:sodium cotransporter that promotes absorption of the D isomers of essential amino acids. Neutral amino acids are the preferred substrates, especially methionine and phenylalanine. The polypeptide is Sodium-dependent nutrient amino acid transporter 1 (NAAT1) (Drosophila melanogaster (Fruit fly)).